A 139-amino-acid polypeptide reads, in one-letter code: ATP synthase epsilon chain, chloroplastic (139 aa).

Belongs to the ATPase epsilon chain family. In terms of assembly, F-type ATPases have 2 components, CF(1) - the catalytic core - and CF(0) - the membrane proton channel. CF(1) has five subunits: alpha(3), beta(3), gamma(1), delta(1), epsilon(1). CF(0) has three main subunits: a, b and c.

The protein resides in the plastid. It localises to the chloroplast thylakoid membrane. Produces ATP from ADP in the presence of a proton gradient across the membrane. The polypeptide is ATP synthase epsilon chain, chloroplastic (Dictyota dichotoma).